The chain runs to 635 residues: DNA primase (635 aa).

The CHC2-type zinc finger occupies 41-65 (CPFHDEKSPSFSVSPAKQMYYCFGC). Residues 265–348 (DEAILVEGYF…SGQVNLRILN (84 aa)) form the Toprim domain. Residues E271, D317, and D319 each coordinate Mg(2+).

It belongs to the DnaG primase family. In terms of assembly, monomer. Interacts with DnaB. Zn(2+) serves as cofactor. The cofactor is Mg(2+).

The catalysed reaction is ssDNA + n NTP = ssDNA/pppN(pN)n-1 hybrid + (n-1) diphosphate.. In terms of biological role, RNA polymerase that catalyzes the synthesis of short RNA molecules used as primers for DNA polymerase during DNA replication. This Synechocystis sp. (strain ATCC 27184 / PCC 6803 / Kazusa) protein is DNA primase.